A 396-amino-acid polypeptide reads, in one-letter code: MSKDKKNEDKETLEELKELSEWQKRNQEYLKKKAEEEVALAEEKEKERQARMGEESEKSEDKQDQESETDQEDSESAKEESEEKVASSEADKEKEEPESKEKEEQDKKLAKKATKEKPAKAKIPGIHILRAFTILFPSLLLLIVSAYLLSPYATMKDIRVEGTVQTTADDIRQASGIQDSDYTINLLLDKAKYEKQIKSNYWVESAQLVYQFPTKFTIKVKEYDIVAYYISGENHYPILSSGQLETSSVSLNSLPETYLSVLFNDSEQIKVFVSELAQISPELKAAIQKVELAPSKVTSDLIRLTMNDSDEVLVPLSEMSKKLPYYSKIKPQLSEPSVVDMEAGIYSYTVADKLIMEAEEKAKQEAKEAEKKQEEEQKKQEEESNRNQTNQRSSRR.

2 disordered regions span residues 1–23 (MSKD…SEWQ) and 37–116 (EVAL…ATKE). Topologically, residues 1–130 (MSKDKKNEDK…AKIPGIHILR (130 aa)) are cytoplasmic. 2 stretches are compositionally biased toward basic and acidic residues: residues 37–65 (EVAL…KQDQ) and 75–116 (ESAK…ATKE). The chain crosses the membrane as a helical span at residues 131-151 (AFTILFPSLLLLIVSAYLLSP). Residues 152–396 (YATMKDIRVE…NQTNQRSSRR (245 aa)) lie on the Extracellular side of the membrane. Residues 153 to 223 (ATMKDIRVEG…TKFTIKVKEY (71 aa)) enclose the POTRA domain. Over residues 361–385 (KAKQEAKEAEKKQEEEQKKQEEESN) the composition is skewed to basic and acidic residues. The disordered stretch occupies residues 361 to 396 (KAKQEAKEAEKKQEEEQKKQEEESNRNQTNQRSSRR). The span at 386-396 (RNQTNQRSSRR) shows a compositional bias: low complexity.

It belongs to the FtsQ/DivIB family. DivIB subfamily.

It is found in the cell membrane. Functionally, cell division protein that may be involved in stabilizing or promoting the assembly of the division complex. This is Cell division protein DivIB from Streptococcus pneumoniae (strain ATCC BAA-255 / R6).